The primary structure comprises 501 residues: Adenylosuccinate synthetase 2, chloroplastic (501 aa).

GTP contacts are provided by residues Gly-87–Lys-93 and Gly-115–Thr-117. Asp-88 (proton acceptor) is an active-site residue. Residues Asp-88 and Gly-115 each contribute to the Mg(2+) site. IMP is bound by residues Asp-88–Lys-91, Asn-113–His-116, Thr-205, Arg-219, Gln-300, Thr-315, and Arg-379. The active-site Proton donor is the His-116. Asn-375–Arg-381 is a binding site for substrate. Residues Arg-381, Lys-407–Asp-409, and Gly-490–Gly-492 contribute to the GTP site.

The protein belongs to the adenylosuccinate synthetase family. In terms of assembly, homodimer. Requires Mg(2+) as cofactor.

The protein resides in the plastid. Its subcellular location is the chloroplast. It catalyses the reaction IMP + L-aspartate + GTP = N(6)-(1,2-dicarboxyethyl)-AMP + GDP + phosphate + 2 H(+). Its pathway is purine metabolism; AMP biosynthesis via de novo pathway; AMP from IMP: step 1/2. Its function is as follows. Plays an important role in the de novo pathway and in the salvage pathway of purine nucleotide biosynthesis. Catalyzes the first committed step in the biosynthesis of AMP from IMP. The sequence is that of Adenylosuccinate synthetase 2, chloroplastic from Capsicum frutescens (Cayenne pepper).